A 172-amino-acid polypeptide reads, in one-letter code: Chromosome-anchoring protein RacA (172 aa).

The segment at residues 5 to 25 (TSDVAIRLGVSPKTIQRWVRK) is a DNA-binding region (H-T-H motif). Disordered stretches follow at residues 57-76 (AAME…RNNI) and 142-172 (QLNN…GLFA). The span at 62–71 (PPTPKRPPTP) shows a compositional bias: pro residues. Residues 83–146 (ESIEPEIARV…ARLEQQLNNR (64 aa)) adopt a coiled-coil conformation. Over residues 142 to 151 (QLNNRPPSSH) the composition is skewed to polar residues.

The protein belongs to the RacA family.

It localises to the cytoplasm. Required for the formation of axial filaments and for anchoring the origin regions at the cell poles in sporulating cells, thus ensuring proper chromosome segregation in the prespore. Binds in a dispersed manner throughout the chromosome but preferentially to sites clustered in the origin portion of the chromosome, causing condensation of the chromosome and its remodeling into an elongated, anchored structure. This chain is Chromosome-anchoring protein RacA, found in Geobacillus kaustophilus (strain HTA426).